The chain runs to 311 residues: Formimidoylglutamase (311 aa).

Mn(2+) contacts are provided by His130, Asp155, His157, Asp159, Cys242, and Asp244.

Belongs to the arginase family. It depends on Mn(2+) as a cofactor.

The catalysed reaction is N-formimidoyl-L-glutamate + H2O = formamide + L-glutamate. Its pathway is amino-acid degradation; L-histidine degradation into L-glutamate; L-glutamate from N-formimidoyl-L-glutamate (hydrolase route): step 1/1. In terms of biological role, catalyzes the conversion of N-formimidoyl-L-glutamate to L-glutamate and formamide. This chain is Formimidoylglutamase, found in Staphylococcus haemolyticus (strain JCSC1435).